A 785-amino-acid chain; its full sequence is Endonuclease MutS2 (785 aa).

Residue 332-339 (GPNTGGKT) participates in ATP binding. The Smr domain occupies 710–785 (IDLRGLDAEE…GDGATIVELK (76 aa)).

This sequence belongs to the DNA mismatch repair MutS family. MutS2 subfamily. Homodimer. Binds to stalled ribosomes, contacting rRNA.

Endonuclease that is involved in the suppression of homologous recombination and thus may have a key role in the control of bacterial genetic diversity. Functionally, acts as a ribosome collision sensor, splitting the ribosome into its 2 subunits. Detects stalled/collided 70S ribosomes which it binds and splits by an ATP-hydrolysis driven conformational change. Acts upstream of the ribosome quality control system (RQC), a ribosome-associated complex that mediates the extraction of incompletely synthesized nascent chains from stalled ribosomes and their subsequent degradation. Probably generates substrates for RQC. This is Endonuclease MutS2 from Clostridium botulinum (strain Eklund 17B / Type B).